The primary structure comprises 652 residues: Trypanothione synthetase (652 aa).

Positions 34–174 constitute a Peptidase C51 domain; it reads SNKHDHFFSG…QHKDGVWTII (141 aa). 328 to 330 serves as a coordination point for ATP; the sequence is RFD. Mg(2+) is bound by residues D330, E344, and N346. ATP is bound by residues K513, K548, G555, Q583, and 618–620; that span reads IIT.

The protein in the C-terminal section; belongs to the glutathionylspermidine synthase preATP-grasp family. The cofactor is Mg(2+). The N-terminus is blocked.

It carries out the reaction spermidine + glutathione + ATP = glutathionylspermidine + ADP + phosphate + H(+). The enzyme catalyses glutathionylspermidine + glutathione + ATP = trypanothione + ADP + phosphate + H(+). Its function is as follows. Conjugates glutathione (gamma-Glu-Cys-Gly) and glutathionylspermidine to form trypanothione (N(1),N(8)-bis(glutathionyl)spermidine), which is involved in maintaining intracellular thiol redox and in defense against oxidants. The chain is Trypanothione synthetase (TRS) from Crithidia fasciculata.